Here is a 400-residue protein sequence, read N- to C-terminus: MNAVYLDNNATTRVDPAAVSAMLPFFTEQFGNASSMHAFGAEVGGALHTARRQLQALLGAEFDHEIVYTAGGTESDNTAILSALETQAGRNEIVTSAVEHPAVLALCAWLEKTRGTRVHYIGVDARGRLDIDAYRRALSPRTAIASIMWANNETGTIFPVETLAAVAHEAGALFHTDAVQAVGKIPMNLRHSEIDMLSLSGHKLHAPKGIGALYVRRGVRLRPLIRGGHQERGRRAGTENVPGIIGLGVAAELARHHIDEENTRVRALRDRLEQGLLERIGNAWVTGDTENRLPNTANVAFEFIEGEAILLLMNKAGIAASSGSACTSGSLEPSHVLRAMHVPYTAAHGAIRFSFSRENTDADVDRVLDVMPGIIAKLREMSPFWDGAAAAKSGFAPTYA.

Residues 72–73 (GT), Asn152, Gln180, and 200–202 (SGH) each bind pyridoxal 5'-phosphate. Position 203 is an N6-(pyridoxal phosphate)lysine (Lys203). Position 238 (Thr238) interacts with pyridoxal 5'-phosphate. Cys326 functions as the Cysteine persulfide intermediate in the catalytic mechanism. Cys326 contacts [2Fe-2S] cluster.

Belongs to the class-V pyridoxal-phosphate-dependent aminotransferase family. NifS/IscS subfamily. Homodimer. It depends on pyridoxal 5'-phosphate as a cofactor.

The enzyme catalyses (sulfur carrier)-H + L-cysteine = (sulfur carrier)-SH + L-alanine. Its function is as follows. Catalyzes the removal of elemental sulfur atoms from cysteine to produce alanine. Seems to participate in the biosynthesis of the nitrogenase metalloclusters by providing the inorganic sulfur required for the Fe-S core formation. The protein is Cysteine desulfurase of Gluconacetobacter diazotrophicus (strain ATCC 49037 / DSM 5601 / CCUG 37298 / CIP 103539 / LMG 7603 / PAl5).